The primary structure comprises 220 residues: Ras-related protein Rab-3A (220 aa).

The GTP site is built by S31, S32, V33, G34, K35, T36, S37, T48, P49, S53, and T54. T36 is a Mg(2+) binding site. Residues 49–58 (PAFVSTVGID) carry the Switch 1 motif. Mg(2+) contacts are provided by T54 and D77. GTP is bound at residue G80. The Switch 2 motif lies at 80 to 96 (GQERYRTITTAYYRGAM). At T86 the chain carries Phosphothreonine. GTP-binding residues include N135, K136, D138, A166, and K167. Residues S188 and S190 each carry the phosphoserine modification. Residues 194-220 (ADPAVTGAKQGPQLTDQQAPPHQDCAC) form a disordered region. S-geranylgeranyl cysteine attachment occurs at residues C218 and C220. C220 is subject to Cysteine methyl ester.

It belongs to the small GTPase superfamily. Rab family. In terms of assembly, interacts with RIMS1 and RIMS2. Interacts with Rabphilin-3A/RPH3A and Rab effector Noc2/RPH3AL. Interacts with SYTL4. Interacts with RAB3IP. Interacts with SGSM1 and SGSM3. Interacts with SYT1. Interacts with MYH9; this interaction is essential for lysosome exocytosis and plasma membrane repair. Interacts with STXBP1; this interaction promotes RAB3A dissociation from the vesicle membrane. Interacts with SNCA. Interacts with GDI1, GDI2, CHM and CHML; phosphorylation at Thr-86 disrupts these interactions. Interacts with MADD (via uDENN domain); the GTP-bound form is preferred for interaction. Mg(2+) is required as a cofactor. Phosphorylation of Thr-86 in the switch II region by LRRK2 prevents the association of RAB regulatory proteins, including CHM, CHML and RAB GDP dissociation inhibitors GDI1 and GDI2.

It localises to the cytoplasm. The protein resides in the cytosol. Its subcellular location is the lysosome. The protein localises to the cytoplasmic vesicle. It is found in the secretory vesicle. It localises to the cell projection. The protein resides in the axon. Its subcellular location is the cell membrane. The protein localises to the presynapse. It is found in the postsynapse. The catalysed reaction is GTP + H2O = GDP + phosphate + H(+). Its activity is regulated as follows. Regulated by guanine nucleotide exchange factors (GEFs) including RAB3IL1 and MADD which promote the exchange of bound GDP for free GTP. Regulated by GTPase activating proteins (GAPs) including RAB3GAP1 and TBC1D10B which increase the GTP hydrolysis activity. Inhibited by GDP dissociation inhibitors (GDIs) which prevent Rab-GDP dissociation. Functionally, the small GTPases Rab are key regulators of intracellular membrane trafficking, from the formation of transport vesicles to their fusion with membranes. Rabs cycle between an inactive GDP-bound form and an active GTP-bound form that is able to recruit to membranes different sets of downstream effectors directly responsible for vesicle formation, movement, tethering and fusion. RAB3A plays a central role in regulated exocytosis and secretion. Controls the recruitment, tethering and docking of secretory vesicles to the plasma membrane. Upon stimulation, switches to its active GTP-bound form, cycles to vesicles and recruits effectors such as RIMS1, RIMS2, Rabphilin-3A/RPH3A, RPH3AL or SYTL4 to help the docking of vesicules onto the plasma membrane. Upon GTP hydrolysis by GTPase-activating protein, dissociates from the vesicle membrane allowing the exocytosis to proceed. Stimulates insulin secretion through interaction with RIMS2 or RPH3AL effectors in pancreatic beta cells. Regulates calcium-dependent lysosome exocytosis and plasma membrane repair (PMR) via the interaction with 2 effectors, SYTL4 and myosin-9/MYH9. Acts as a positive regulator of acrosome content secretion in sperm cells by interacting with RIMS1. Also plays a role in the regulation of dopamine release by interacting with synaptotagmin I/SYT. The sequence is that of Ras-related protein Rab-3A (RAB3A) from Sus scrofa (Pig).